Here is a 468-residue protein sequence, read N- to C-terminus: 6-phosphogluconate dehydrogenase, decarboxylating (468 aa).

NADP(+)-binding positions include 9–14 (GLAVMG), 32–34 (NRS), 73–75 (VQA), and Asn-101. Residues Asn-101 and 127–129 (SGG) each bind substrate. Lys-182 acts as the Proton acceptor in catalysis. 185–186 (HN) serves as a coordination point for substrate. Glu-189 (proton donor) is an active-site residue. Residues Tyr-190, Lys-259, Arg-286, Arg-444, and His-450 each contribute to the substrate site.

Belongs to the 6-phosphogluconate dehydrogenase family. As to quaternary structure, homodimer.

The enzyme catalyses 6-phospho-D-gluconate + NADP(+) = D-ribulose 5-phosphate + CO2 + NADPH. The protein operates within carbohydrate degradation; pentose phosphate pathway; D-ribulose 5-phosphate from D-glucose 6-phosphate (oxidative stage): step 3/3. Functionally, catalyzes the oxidative decarboxylation of 6-phosphogluconate to ribulose 5-phosphate and CO(2), with concomitant reduction of NADP to NADPH. The sequence is that of 6-phosphogluconate dehydrogenase, decarboxylating (gnd) from Staphylococcus aureus (strain Mu50 / ATCC 700699).